The chain runs to 476 residues: NADH-quinone oxidoreductase subunit N (476 aa).

The next 14 membrane-spanning stretches (helical) occupy residues 4 to 24 (LLAL…MLTI), 32 to 52 (LTAT…VVAW), 67 to 87 (GLAV…ATLG), 100 to 117 (EYYL…ALVS), 121 to 141 (LAAL…MLAY), 155 to 175 (YMVL…LLYS), 198 to 218 (LMAG…IVPF), 230 to 250 (PAPA…LVLL), 263 to 283 (LHSL…LLAL), 291 to 311 (LLGY…VVND), 319 to 339 (ALYL…VTLL), 366 to 386 (AVLT…GFIG), 406 to 426 (VVAG…TLFL), and 447 to 467 (VVVL…APMI).

This sequence belongs to the complex I subunit 2 family. As to quaternary structure, NDH-1 is composed of 14 different subunits. Subunits NuoA, H, J, K, L, M, N constitute the membrane sector of the complex.

It is found in the cell inner membrane. The catalysed reaction is a quinone + NADH + 5 H(+)(in) = a quinol + NAD(+) + 4 H(+)(out). NDH-1 shuttles electrons from NADH, via FMN and iron-sulfur (Fe-S) centers, to quinones in the respiratory chain. The immediate electron acceptor for the enzyme in this species is believed to be ubiquinone. Couples the redox reaction to proton translocation (for every two electrons transferred, four hydrogen ions are translocated across the cytoplasmic membrane), and thus conserves the redox energy in a proton gradient. This is NADH-quinone oxidoreductase subunit N from Chromohalobacter salexigens (strain ATCC BAA-138 / DSM 3043 / CIP 106854 / NCIMB 13768 / 1H11).